The chain runs to 358 residues: MILLGSTGSIGQNALSLARDFRLPVEVLVAGHNLSLLNAQIAEFQPKIIVIADSSRASELSLPKDSKLLFGEEGIIESLHLAQSSFVLNALVGFLGLRPTLESLRLGKTLALANKESLVAGGSFVDASKIIPVDSEHFSLWFLKSDKPFSRLFITASGGAFRDTPLEEIPLQKAQAALRHPNWSMGRKITVDSATMVNKLFEILEARWLFNTKSVDALIERNSLVHALIGYPDGSFSAHIAQADMRLPLAYAMLGKLDQPLGPPLELERLAALSFEPINPSRYPLWNLKEKLLTHPWLGITLNAANEVAVEKFLEGKILFGEIPRYIERSLERFSMIPASIEELFALDSEVRQFAHKL.

Residues Thr7, Gly8, Ser9, Ile10, Gly31, Asn33, and Asn114 each coordinate NADPH. Lys115 lines the 1-deoxy-D-xylulose 5-phosphate pocket. Glu116 is a binding site for NADPH. Asp134 is a Mn(2+) binding site. The 1-deoxy-D-xylulose 5-phosphate site is built by Ser135, Glu136, Ser157, and His180. Mn(2+) is bound at residue Glu136. NADPH is bound at residue Gly186. Positions 193, 198, 199, and 202 each coordinate 1-deoxy-D-xylulose 5-phosphate. Position 202 (Glu202) interacts with Mn(2+).

The protein belongs to the DXR family. Mg(2+) is required as a cofactor. Mn(2+) serves as cofactor.

The enzyme catalyses 2-C-methyl-D-erythritol 4-phosphate + NADP(+) = 1-deoxy-D-xylulose 5-phosphate + NADPH + H(+). It participates in isoprenoid biosynthesis; isopentenyl diphosphate biosynthesis via DXP pathway; isopentenyl diphosphate from 1-deoxy-D-xylulose 5-phosphate: step 1/6. In terms of biological role, catalyzes the NADPH-dependent rearrangement and reduction of 1-deoxy-D-xylulose-5-phosphate (DXP) to 2-C-methyl-D-erythritol 4-phosphate (MEP). This chain is 1-deoxy-D-xylulose 5-phosphate reductoisomerase, found in Wolinella succinogenes (strain ATCC 29543 / DSM 1740 / CCUG 13145 / JCM 31913 / LMG 7466 / NCTC 11488 / FDC 602W) (Vibrio succinogenes).